The sequence spans 203 residues: MDHSKQQNASITQAQAEEAVRTLLRWAGEDPTREGLLDTPRRVVEAYGDWFSGYREDPHDYLQRTFEEISGYDELIVLRNITYESHCEHHMAPIIGKVHIGYLPNGKVVGISKLARVVESYARRFQIQEKMTAQIAACIQETLTPRGVGVVIEGAHACMTTRGIHKRGVSMVTSKMLGTFREDARTRAEFLQFIEVGTNVMDL.

C87, H90, and C158 together coordinate Zn(2+).

The protein belongs to the GTP cyclohydrolase I family. In terms of assembly, toroid-shaped homodecamer, composed of two pentamers of five dimers.

The catalysed reaction is GTP + H2O = 7,8-dihydroneopterin 3'-triphosphate + formate + H(+). It functions in the pathway cofactor biosynthesis; 7,8-dihydroneopterin triphosphate biosynthesis; 7,8-dihydroneopterin triphosphate from GTP: step 1/1. In Xylella fastidiosa (strain 9a5c), this protein is GTP cyclohydrolase 1.